The following is a 258-amino-acid chain: Ribosomal RNA small subunit methyltransferase J (258 aa).

S-adenosyl-L-methionine is bound by residues 107–108, 123–124, and aspartate 177; these read RD and ER.

This sequence belongs to the methyltransferase superfamily. RsmJ family.

Its subcellular location is the cytoplasm. It carries out the reaction guanosine(1516) in 16S rRNA + S-adenosyl-L-methionine = N(2)-methylguanosine(1516) in 16S rRNA + S-adenosyl-L-homocysteine + H(+). Functionally, specifically methylates the guanosine in position 1516 of 16S rRNA. In Stutzerimonas stutzeri (strain A1501) (Pseudomonas stutzeri), this protein is Ribosomal RNA small subunit methyltransferase J.